Reading from the N-terminus, the 500-residue chain is Probable cytosol aminopeptidase (500 aa).

Mn(2+)-binding residues include Lys-265 and Asp-270. Residue Lys-277 is part of the active site. The Mn(2+) site is built by Asp-288, Asp-347, and Glu-349. Residue Arg-351 is part of the active site.

Belongs to the peptidase M17 family. The cofactor is Mn(2+).

Its subcellular location is the cytoplasm. The catalysed reaction is Release of an N-terminal amino acid, Xaa-|-Yaa-, in which Xaa is preferably Leu, but may be other amino acids including Pro although not Arg or Lys, and Yaa may be Pro. Amino acid amides and methyl esters are also readily hydrolyzed, but rates on arylamides are exceedingly low.. It carries out the reaction Release of an N-terminal amino acid, preferentially leucine, but not glutamic or aspartic acids.. Presumably involved in the processing and regular turnover of intracellular proteins. Catalyzes the removal of unsubstituted N-terminal amino acids from various peptides. The protein is Probable cytosol aminopeptidase of Rickettsia peacockii (strain Rustic).